The primary structure comprises 305 residues: MTNEDTFSTIDHAINLETGKTIRVWETFPKDNSLVKNNTILIASGFARRMDHFAGLAEYLSSNGFHVIRYDSLHHVGLSSGNINEFSMTIGKKSLLTVIEWLKRRNINKFGLIAASLSARIAYDVANEIDLSFLVTAVGVVNLRDTLERALKYDYLQLPIEELPEDLDFEGHNLGSEIFVTDCFKHQWDTFNSTKNKMKDLNIPFIAFTANDDSWVKQNEVLELIESLNPEKCQLYSLIGSSHDLGENLVVLRNFYQSVTKAAIALDKGSLNLDINIIEPKFEDITSVTVKERRLKHNIESLELA.

Active-site charge relay system residues include S116, D213, and H243.

The protein belongs to the LuxD family.

It functions in the pathway lipid metabolism; fatty acid reduction for biolumincescence. In terms of biological role, acyl transferase is part of the fatty acid reductase system required for aldehyde biosynthesis; it produces fatty acids for the luminescent reaction. The polypeptide is Acyl transferase (Shewanella woodyi (strain ATCC 51908 / MS32)).